Here is a 507-residue protein sequence, read N- to C-terminus: Chromosomal replication initiator protein DnaA (507 aa).

Positions 1–72 are domain I, interacts with DnaA modulators; it reads MNNYNKIWEI…KKITKLKFEE (72 aa). The segment at 72-162 is domain II; the sequence is EKIIIEFVSE…KISFNKYNYG (91 aa). Positions 163–384 are domain III, AAA+ region; sequence NTNPKYSFDN…GALLRLLNYA (222 aa). Residues glycine 207, glycine 209, lysine 210, and threonine 211 each contribute to the ATP site. Residues 385 to 507 are domain IV, binds dsDNA; it reads QTFGYDIDIN…LELILKKINS (123 aa).

It belongs to the DnaA family. Oligomerizes as a right-handed, spiral filament on DNA at oriC.

Its subcellular location is the cytoplasm. Plays an essential role in the initiation and regulation of chromosomal replication. ATP-DnaA binds to the origin of replication (oriC) to initiate formation of the DNA replication initiation complex once per cell cycle. Binds the DnaA box (a 9 base pair repeat at the origin) and separates the double-stranded (ds)DNA. Forms a right-handed helical filament on oriC DNA; dsDNA binds to the exterior of the filament while single-stranded (ss)DNA is stabiized in the filament's interior. The ATP-DnaA-oriC complex binds and stabilizes one strand of the AT-rich DNA unwinding element (DUE), permitting loading of DNA polymerase. After initiation quickly degrades to an ADP-DnaA complex that is not apt for DNA replication. Binds acidic phospholipids. This Onion yellows phytoplasma (strain OY-M) protein is Chromosomal replication initiator protein DnaA.